Reading from the N-terminus, the 324-residue chain is Calmodulin-like protein 12 (324 aa).

EF-hand domains are found at residues 8 to 43, 44 to 79, 97 to 132, 133 to 168, 187 to 222, and 223 to 258; these read DQITEYRESFRLFDKNGDGSITKKELGTMMRSIGEK, PTKADLQDLMNEADLDGDGTIDFPEFLCVMAKNQGH, DQITEYRESFRLFDKNGDGSITKKELRTVMFSLGKN, RTKADLQDMMNEVDLDGDGTIDFPEFLYLMAKNQGH, DQILEFREAFRVFDKNGDGYITVNELRTTMRSLGET, and QTKAELQDMINEADADGDGTISFSEFVCVMTGKMID. Ca(2+) is bound by residues Asp21, Asn23, Asp25, Ser27, Glu32, Asp57, Asp59, Asp61, Thr63, Glu68, Asp110, Asn112, Asp114, Ser116, Glu121, Asp146, Asp148, Asp150, Thr152, Glu157, Asp200, Asn202, Asp204, Tyr206, Glu211, Asp236, Asp238, Asp240, Thr242, and Glu247.

It belongs to the calmodulin family. Interacts with PID. Binds to ABCG36.

Potential calcium sensor that binds calcium in vitro. In Arabidopsis thaliana (Mouse-ear cress), this protein is Calmodulin-like protein 12.